The sequence spans 139 residues: FAD synthase (139 aa).

ATP-binding positions include T9–F10, H14–H17, and N92.

Belongs to the archaeal FAD synthase family. As to quaternary structure, homodimer. Requires a divalent metal cation as cofactor.

It carries out the reaction FMN + ATP + H(+) = FAD + diphosphate. It functions in the pathway cofactor biosynthesis; FAD biosynthesis; FAD from FMN: step 1/1. Its function is as follows. Catalyzes the transfer of the AMP portion of ATP to flavin mononucleotide (FMN) to produce flavin adenine dinucleotide (FAD) coenzyme. The sequence is that of FAD synthase from Methanocella paludicola (strain DSM 17711 / JCM 13418 / NBRC 101707 / SANAE).